The primary structure comprises 184 residues: MAKYNEKELADTSKFLSFVLRHKPEAIGIVLDREGWADIDKLILCAQKAGKRLTRALLDTVVATSDKKRFSYSSDGRCIRAVQGHSTSQVAISFAEKTPPQFLYHGTASRFLDEIKKQGLIAGERHYVHLSADEATARKVGARHGSPVILTVKAQEMAKRGIPFWQAENGVWLTSTVAVEFLEW.

Belongs to the KptA/TPT1 family.

In terms of biological role, removes the 2'-phosphate from RNA via an intermediate in which the phosphate is ADP-ribosylated by NAD followed by a presumed transesterification to release the RNA and generate ADP-ribose 1''-2''-cyclic phosphate (APPR&gt;P). May function as an ADP-ribosylase. This is Probable RNA 2'-phosphotransferase from Escherichia coli (strain 55989 / EAEC).